Reading from the N-terminus, the 508-residue chain is Non-structural protein 1 (508 aa).

The segment covering 424 to 453 has biased composition (polar residues); sequence NTESTTTNNAQSPVSDPVNASANVKTSPAG. The interval 424-464 is disordered; the sequence is NTESTTTNNAQSPVSDPVNASANVKTSPAGTHTDESVMKKE. A compositionally biased stretch (basic and acidic residues) spans 455–464; the sequence is HTDESVMKKE.

The sequence is that of Non-structural protein 1 (Segment-5) from Banna virus (BAV).